The chain runs to 239 residues: MIPTNDAHITLMNYDDPLEWAQSVTRELENILLQEITQRGRASLLLSGGTTPALVYETLATRPLDWSKIDIGLVDERWLSPQDKDSNAWLVRHTLLEHAKHATFLPLIRPGKTLNQCVHDANLQITHSPPPCAVVLGMGNDGHTASLFPGSLDLQKAINTPQPYVALDATGCPGAGVWPLRITLTPAGLNNIPHRLLLLRGKQKLKVLETALSCKDALDYPIRTAIDLPNARLRVHWCA.

It belongs to the glucosamine/galactosamine-6-phosphate isomerase family. 6-phosphogluconolactonase subfamily.

The catalysed reaction is 6-phospho-D-glucono-1,5-lactone + H2O = 6-phospho-D-gluconate + H(+). Its pathway is carbohydrate degradation; pentose phosphate pathway; D-ribulose 5-phosphate from D-glucose 6-phosphate (oxidative stage): step 2/3. In terms of biological role, hydrolysis of 6-phosphogluconolactone to 6-phosphogluconate. The polypeptide is 6-phosphogluconolactonase (pgl) (Xylella fastidiosa (strain Temecula1 / ATCC 700964)).